The primary structure comprises 382 residues: Succinate--CoA ligase [ADP-forming] subunit beta (382 aa).

Residues Lys46, 53-55 (GRG), Val95, and Glu100 each bind ATP. Mg(2+) contacts are provided by Asn192 and Asp206. Residues Asn257 and 314–316 (GIT) contribute to the substrate site.

The protein belongs to the succinate/malate CoA ligase beta subunit family. As to quaternary structure, heterotetramer of two alpha and two beta subunits. Mg(2+) is required as a cofactor.

It catalyses the reaction succinate + ATP + CoA = succinyl-CoA + ADP + phosphate. The enzyme catalyses GTP + succinate + CoA = succinyl-CoA + GDP + phosphate. The protein operates within carbohydrate metabolism; tricarboxylic acid cycle; succinate from succinyl-CoA (ligase route): step 1/1. Functionally, succinyl-CoA synthetase functions in the citric acid cycle (TCA), coupling the hydrolysis of succinyl-CoA to the synthesis of either ATP or GTP and thus represents the only step of substrate-level phosphorylation in the TCA. The beta subunit provides nucleotide specificity of the enzyme and binds the substrate succinate, while the binding sites for coenzyme A and phosphate are found in the alpha subunit. The chain is Succinate--CoA ligase [ADP-forming] subunit beta from Bacteroides fragilis (strain ATCC 25285 / DSM 2151 / CCUG 4856 / JCM 11019 / LMG 10263 / NCTC 9343 / Onslow / VPI 2553 / EN-2).